The following is a 51-amino-acid chain: Light-harvesting protein B800/850/890 beta-2 chain (51 aa).

Residues 1-17 (ADEMRNVSDEEAKEFHA) lie on the Cytoplasmic side of the membrane. Residues H16 and H34 each coordinate a bacteriochlorophyll. A helical membrane pass occupies residues 18–40 (MFSQAFTVYVGVAVVAHILAWAW). The Periplasmic segment spans residues 41 to 51 (RPWIPGDEGFG).

It belongs to the antenna complex beta subunit family. As to quaternary structure, the core complex is formed by different alpha and beta chains, binding bacteriochlorophyll molecules, and arranged most probably in tetrameric structures disposed around the reaction center. The non-pigmented gamma chains may constitute additional components.

It localises to the cell inner membrane. In terms of biological role, antenna complexes are light-harvesting systems, which transfer the excitation energy to the reaction centers. The polypeptide is Light-harvesting protein B800/850/890 beta-2 chain (Halorhodospira halophila (strain DSM 244 / SL1) (Ectothiorhodospira halophila (strain DSM 244 / SL1))).